The chain runs to 614 residues: MSIIFFIILFPLIGFLFLSTIQDFIFKRYTLNIGIFSIFISFFITCFYGVSILKNNNQVFTQILWKWLSINEFKIDFGFFLDGLSLSMLFVITGVGLLIHIFSSWYMRYKEGQSRFFAYTNLFIASMSVLVLADNFLFMYLGWEGVSVCSYLLIGFYYTELKNNLCAFKAFILTRVSDVFLMIGMFLIYREFNSFNFQEIKFLSSFLNVENFYYLDYITLFLLLGVIGKSAQLPLQTWLSDAMVGPTPVSALIHAATMVTAGVYLIARTHFLFLLTPGILYLVGLIGTLTILVSSISALVQKDIKRILAYSTMSQIGYMFLALGVKAWSAAITHLIMHAIFKALLFLSAGSLIKSCKNEKNIFKMGGLRKQLPFLYISFIVGGASLVSFPLITAGFYSKGNILFSVLKSGCIDFFIIGLFCSFLTAIYTFRMIFVIFHGKNIHTADSSTNLQHNIPLFVLLLLSTVFGSYISPPLSDVFPLSYTPIDHKFAFEIICSILSLSGIYLSYYIWIKNLYVLDKIFQFKFMRYLYYFFLKGWGFNWFYKISFVYFYLYISKRLSADPLNKIINYFLKVTQIFNFYLLKTSNGYVRWYVASMILGINFIFLLMLFFYFN.

15 helical membrane passes run 1–21 (MSIIFFIILFPLIGFLFLSTI), 33–53 (IGIFSIFISFFITCFYGVSIL), 79–99 (FFLDGLSLSMLFVITGVGLLI), 136–156 (FLFMYLGWEGVSVCSYLLIGF), 168–188 (FKAFILTRVSDVFLMIGMFLI), 207–227 (LNVENFYYLDYITLFLLLGVI), 247–267 (TPVSALIHAATMVTAGVYLIA), 271–291 (FLFLLTPGILYLVGLIGTLTI), 327–347 (AWSAAITHLIMHAIFKALLFL), 372–392 (LPFLYISFIVGGASLVSFPLI), 410–430 (GCIDFFIIGLFCSFLTAIYTF), 455–475 (IPLFVLLLLSTVFGSYISPPL), 492–512 (FEIICSILSLSGIYLSYYIWI), 533–553 (FFLKGWGFNWFYKISFVYFYL), and 593–613 (YVASMILGINFIFLLMLFFYF).

It belongs to the complex I subunit 5 family. Composed of 13 different subunits. Subunits NuoA, H, J, K, L, M, N constitute the membrane sector of the complex.

It localises to the cell membrane. The catalysed reaction is a quinone + NADH + 5 H(+)(in) = a quinol + NAD(+) + 4 H(+)(out). In terms of biological role, NDH-1 shuttles electrons from NADH, via FMN and iron-sulfur (Fe-S) centers, to quinones in the respiratory chain. Couples the redox reaction to proton translocation (for every two electrons transferred, four hydrogen ions are translocated across the cytoplasmic membrane), and thus conserves the redox energy in a proton gradient. This chain is NADH-quinone oxidoreductase subunit L (nuoL), found in Buchnera aphidicola subsp. Acyrthosiphon pisum (strain APS) (Acyrthosiphon pisum symbiotic bacterium).